Consider the following 103-residue polypeptide: Large ribosomal subunit protein bL21 (103 aa).

The protein belongs to the bacterial ribosomal protein bL21 family. In terms of assembly, part of the 50S ribosomal subunit. Contacts protein L20.

This protein binds to 23S rRNA in the presence of protein L20. This Haemophilus influenzae (strain 86-028NP) protein is Large ribosomal subunit protein bL21.